The primary structure comprises 343 residues: MNGSKKIYLGIGLVALLMIFIYWLMPKDTANASSQIESTNASAIIATSPGQQNQLSENTTPFGSVSQHDTQVNCQLQLNAANHLIVNEQTRNCFEYFLTQYGEKSLTQIDQDIKNYFTQSLPQPARDQAQDLWQRYLKYREELGNLKEPAIAKTDIAYYRAVFTSRQMLRQRFFSATEIAGLFGSEDIYNQYTLERMAILNNSKLSEIEKAKQLKALFDQLPQDWKANLEQLSKLDDLKQLTTSIKKNGGSAQELHDMRTNLVGHDATARLEQLDVERSNWKSNVTQYLDERQTILNSNMSDTAKQNAISALRSKNFTAPQDQIRVQAFESAKDQGQSLPFSE.

The chain crosses the membrane as a helical span at residues 7–27; that stretch reads IYLGIGLVALLMIFIYWLMPK.

The protein belongs to the lipase chaperone family.

It is found in the cell inner membrane. May be involved in the folding of the extracellular lipase during its passage through the periplasm. The sequence is that of Lipase chaperone (lifO) from Acinetobacter baylyi (strain ATCC 33305 / BD413 / ADP1).